A 464-amino-acid chain; its full sequence is Chromosomal replication initiator protein DnaA (464 aa).

The tract at residues 1–82 (MSLSLWQQCL…LLRFEVGSKP (82 aa)) is domain I, interacts with DnaA modulators. A domain II region spans residues 82–127 (PPQMAVLQPASQHASEAPSQAAVARPRPSRPSWDNAPVQPELSYRS). The tract at residues 91–118 (ASQHASEAPSQAAVARPRPSRPSWDNAP) is disordered. The tract at residues 128–344 (NVNPKHNFDN…GALNRVIANA (217 aa)) is domain III, AAA+ region. ATP-binding residues include glycine 172, glycine 174, lysine 175, and threonine 176. Residues 345-464 (NFTGRAITID…FSNLIRTLSS (120 aa)) form a domain IV, binds dsDNA region.

This sequence belongs to the DnaA family. Oligomerizes as a right-handed, spiral filament on DNA at oriC.

The protein resides in the cytoplasm. Plays an essential role in the initiation and regulation of chromosomal replication. ATP-DnaA binds to the origin of replication (oriC) to initiate formation of the DNA replication initiation complex once per cell cycle. Binds the DnaA box (a 9 base pair repeat at the origin) and separates the double-stranded (ds)DNA. Forms a right-handed helical filament on oriC DNA; dsDNA binds to the exterior of the filament while single-stranded (ss)DNA is stabiized in the filament's interior. The ATP-DnaA-oriC complex binds and stabilizes one strand of the AT-rich DNA unwinding element (DUE), permitting loading of DNA polymerase. After initiation quickly degrades to an ADP-DnaA complex that is not apt for DNA replication. Binds acidic phospholipids. The chain is Chromosomal replication initiator protein DnaA from Sodalis glossinidius (strain morsitans).